Reading from the N-terminus, the 406-residue chain is Tryptophan synthase beta chain (406 aa).

Position 99 is an N6-(pyridoxal phosphate)lysine (Lys99).

The protein belongs to the TrpB family. In terms of assembly, tetramer of two alpha and two beta chains. Requires pyridoxal 5'-phosphate as cofactor.

It carries out the reaction (1S,2R)-1-C-(indol-3-yl)glycerol 3-phosphate + L-serine = D-glyceraldehyde 3-phosphate + L-tryptophan + H2O. The protein operates within amino-acid biosynthesis; L-tryptophan biosynthesis; L-tryptophan from chorismate: step 5/5. In terms of biological role, the beta subunit is responsible for the synthesis of L-tryptophan from indole and L-serine. This chain is Tryptophan synthase beta chain, found in Brucella canis (strain ATCC 23365 / NCTC 10854 / RM-666).